The chain runs to 350 residues: Purine-binding protein BAB2_0673 (350 aa).

Residues 1–17 (MVIATVAGFMLGGAAHA) form the signal peptide. Adenine contacts are provided by tryptophan 36, tryptophan 185, and aspartate 211.

The protein belongs to the BMP lipoprotein family.

Functionally, binds adenine and probably also other purines, such as guanine. May play a role in adenine and guanine uptake. May be part of an ABC-type uptake system for adenine and similar ligands. The polypeptide is Purine-binding protein BAB2_0673 (Brucella abortus (strain 2308)).